Here is a 453-residue protein sequence, read N- to C-terminus: Bestrophin homolog 5 (453 aa).

The next 4 membrane-spanning stretches (helical) occupy residues 78–98, 113–133, 275–295, and 314–334; these read ELIV…FALT, DARM…NIII, IPLM…FLCI, and LYIP…LKVA.

Belongs to the anion channel-forming bestrophin (TC 1.A.46) family. Calcium-sensitive chloride channel subfamily. In terms of assembly, forms oligomers.

The protein resides in the cell membrane. Its function is as follows. Forms chloride channels. The sequence is that of Bestrophin homolog 5 (best-5) from Caenorhabditis elegans.